Consider the following 316-residue polypeptide: Ornithine carbamoyltransferase (316 aa).

Carbamoyl phosphate contacts are provided by residues 59-62, Gln-86, Arg-110, and 137-140; these read STRT and HPCQ. L-ornithine contacts are provided by residues Asn-168, Asp-232, and 236–237; that span reads SM. Residues 273-274 and Arg-301 contribute to the carbamoyl phosphate site; that span reads CL.

The protein belongs to the aspartate/ornithine carbamoyltransferase superfamily. OTCase family.

It is found in the cytoplasm. The enzyme catalyses carbamoyl phosphate + L-ornithine = L-citrulline + phosphate + H(+). It functions in the pathway amino-acid degradation; L-arginine degradation via ADI pathway; carbamoyl phosphate from L-arginine: step 2/2. Functionally, reversibly catalyzes the transfer of the carbamoyl group from carbamoyl phosphate (CP) to the N(epsilon) atom of ornithine (ORN) to produce L-citrulline. In Listeria monocytogenes serotype 4a (strain HCC23), this protein is Ornithine carbamoyltransferase.